Reading from the N-terminus, the 117-residue chain is uncharacterized protein (117 aa).

The span at 1 to 12 (MAQNSVSLSAGD) shows a compositional bias: polar residues. Disordered regions lie at residues 1 to 30 (MAQNSVSLSAGDQANRMAHRSSQGDLNPSA) and 43 to 87 (VTRL…SPYP).

This is an uncharacterized protein from Mus musculus (Mouse).